A 116-amino-acid polypeptide reads, in one-letter code: Protein Rev (116 aa).

Phosphoserine; by host CK2 occurs at positions 5 and 8. Residues L18–N26 are homomultimerization. The tract at residues Y23 to R48 is disordered. The Nuclear localization signal and RNA-binding (RRE) motif lies at T34–R50. The span at Q36–E47 shows a compositional bias: basic residues. The Nuclear export signal and binding to XPO1 motif lies at L73 to D84. The tract at residues G90–E116 is disordered. Phosphoserine; by host is present on residues S92 and S99.

The protein belongs to the HIV-1 REV protein family. Homomultimer; when bound to the RRE. Multimeric assembly is essential for activity and may involve XPO1. Binds to human KPNB1, XPO1, TNPO1, RANBP5 and IPO7. Interacts with the viral Integrase. Interacts with human KHDRBS1. Interacts with human NAP1; this interaction decreases Rev multimerization and stimulates its activity. Interacts with human DEAD-box helicases DDX3 and DDX24; these interactions may serve for viral RNA export to the cytoplasm and packaging, respectively. Interacts with human PSIP1; this interaction may inhibit HIV-1 DNA integration by promoting dissociation of the Integrase-LEDGF/p75 complex. Asymmetrically arginine dimethylated at one site by host PRMT6. Methylation impairs the RNA-binding activity and export of viral RNA from the nucleus to the cytoplasm. In terms of processing, phosphorylated by protein kinase CK2. Presence of, and maybe binding to the N-terminus of the regulatory beta subunit of CK2 is necessary for CK2-mediated Rev's phosphorylation.

The protein localises to the host nucleus. It is found in the host nucleolus. The protein resides in the host cytoplasm. Its function is as follows. Escorts unspliced or incompletely spliced viral pre-mRNAs (late transcripts) out of the nucleus of infected cells. These pre-mRNAs carry a recognition sequence called Rev responsive element (RRE) located in the env gene, that is not present in fully spliced viral mRNAs (early transcripts). This function is essential since most viral proteins are translated from unspliced or partially spliced pre-mRNAs which cannot exit the nucleus by the pathway used by fully processed cellular mRNAs. Rev itself is translated from a fully spliced mRNA that readily exits the nucleus. Rev's nuclear localization signal (NLS) binds directly to KPNB1/Importin beta-1 without previous binding to KPNA1/Importin alpha-1. KPNB1 binds to the GDP bound form of RAN (Ran-GDP) and targets Rev to the nucleus. In the nucleus, the conversion from Ran-GDP to Ran-GTP dissociates Rev from KPNB1 and allows Rev's binding to the RRE in viral pre-mRNAs. Rev multimerization on the RRE via cooperative assembly exposes its nuclear export signal (NES) to the surface. Rev can then form a complex with XPO1/CRM1 and Ran-GTP, leading to nuclear export of the complex. Conversion from Ran-GTP to Ran-GDP mediates dissociation of the Rev/RRE/XPO1/RAN complex, so that Rev can return to the nucleus for a subsequent round of export. Beside KPNB1, also seems to interact with TNPO1/Transportin-1, RANBP5/IPO5 and IPO7/RANBP7 for nuclear import. The nucleoporin-like HRB/RIP is an essential cofactor that probably indirectly interacts with Rev to release HIV RNAs from the perinuclear region to the cytoplasm. This Homo sapiens (Human) protein is Protein Rev.